Consider the following 582-residue polypeptide: Aspartate--tRNA ligase (582 aa).

L-aspartate is bound at residue E174. The interval 198–201 (QITK) is aspartate. Residue R220 coordinates L-aspartate. ATP is bound by residues 220–222 (RDE) and Q229. H443 is a binding site for L-aspartate. E477 contributes to the ATP binding site. An L-aspartate-binding site is contributed by R484. 529–532 (GLDR) lines the ATP pocket.

The protein belongs to the class-II aminoacyl-tRNA synthetase family. Type 1 subfamily. Homodimer.

The protein resides in the cytoplasm. It catalyses the reaction tRNA(Asp) + L-aspartate + ATP = L-aspartyl-tRNA(Asp) + AMP + diphosphate. Catalyzes the attachment of L-aspartate to tRNA(Asp) in a two-step reaction: L-aspartate is first activated by ATP to form Asp-AMP and then transferred to the acceptor end of tRNA(Asp). The polypeptide is Aspartate--tRNA ligase (Streptococcus pyogenes serotype M5 (strain Manfredo)).